We begin with the raw amino-acid sequence, 313 residues long: Ribosomal RNA small subunit methyltransferase H (313 aa).

S-adenosyl-L-methionine contacts are provided by residues Gly-34–His-36, Asp-53, Phe-80, Asp-101, and Gln-108.

It belongs to the methyltransferase superfamily. RsmH family.

It localises to the cytoplasm. It catalyses the reaction cytidine(1402) in 16S rRNA + S-adenosyl-L-methionine = N(4)-methylcytidine(1402) in 16S rRNA + S-adenosyl-L-homocysteine + H(+). Its function is as follows. Specifically methylates the N4 position of cytidine in position 1402 (C1402) of 16S rRNA. In Lacticaseibacillus paracasei (strain ATCC 334 / BCRC 17002 / CCUG 31169 / CIP 107868 / KCTC 3260 / NRRL B-441) (Lactobacillus paracasei), this protein is Ribosomal RNA small subunit methyltransferase H.